A 255-amino-acid polypeptide reads, in one-letter code: Malonyl-[acyl-carrier protein] O-methyltransferase (255 aa).

The protein belongs to the methyltransferase superfamily.

It catalyses the reaction malonyl-[ACP] + S-adenosyl-L-methionine = malonyl-[ACP] methyl ester + S-adenosyl-L-homocysteine. It functions in the pathway cofactor biosynthesis; biotin biosynthesis. Its function is as follows. Converts the free carboxyl group of a malonyl-thioester to its methyl ester by transfer of a methyl group from S-adenosyl-L-methionine (SAM). It allows to synthesize pimeloyl-ACP via the fatty acid synthetic pathway. This is Malonyl-[acyl-carrier protein] O-methyltransferase from Porphyromonas gingivalis (strain ATCC BAA-308 / W83).